The chain runs to 509 residues: Group 3 secretory phospholipase A2 (509 aa).

The signal sequence occupies residues 1–19; sequence MGVQAGLFGMLGFLGVALG. The segment at 123–149 is disordered; that stretch reads ESPAGARKKRAAGQSGVPGGGHQREKR. The segment at 150-291 is phospholipase A2-like; sequence GWTMPGTLWC…SWSSRATSPT (142 aa). Positions 158, 160, and 162 each coordinate Ca(2+). 4 disulfide bridges follow: Cys-159-Cys-181, Cys-180-Cys-220, Cys-187-Cys-213, and Cys-211-Cys-244. Asn-167 carries an N-linked (GlcNAc...) asparagine glycan. His-184 is an active-site residue. A Ca(2+)-binding site is contributed by Asp-185. The active site involves Asp-214. N-linked (GlcNAc...) asparagine glycosylation is present at Asn-280. The disordered stretch occupies residues 283–354; the sequence is WSSRATSPTP…LQGPQGGLKP (72 aa). The segment covering 284-296 has biased composition (low complexity); it reads SSRATSPTPSSRS. The span at 302–322 shows a compositional bias: basic residues; the sequence is PRQKQHLRKGPPHQKGSKRPS. 3 N-linked (GlcNAc...) asparagine glycosylation sites follow: Asn-325, Asn-396, and Asn-439. The interval 458–482 is disordered; sequence QQRRHQLQDKGTDERQPWPSEPLRG. The segment covering 463–473 has biased composition (basic and acidic residues); that stretch reads QLQDKGTDERQ.

Belongs to the phospholipase A2 family. Requires Ca(2+) as cofactor. Post-translationally, N-glycosylation does not affect the catalytic activity, but is required for proper secretion. A nonglycosylated form is observed in several cell types. In several cell types, the N- and C-termini are cleaved off. In terms of tissue distribution, expressed in kidney, heart, liver, and skeletal muscle. Also present in placenta and peripheral blood leukocytes. Not detected in colon, thymus, spleen and small intestine. In lung, expressed in bronchial epithelial cells and alveolar macrophages, but scarcely detected in alveolar epithelium, arterial walls and interstitial fibroblasts (at protein level). In joints of osteoarthritis and rheumatoid arthritis, expressed in endothelial cells (at protein level). In normal heart, detected in some vessels. In myocardial tissues with acute infarction, expressed in vascular endothelial cells adjacent to cardiomyocytes and those in lesions with granulation. Expression in cardiomyocytes is scarce (at protein level). In uterus, breast and colon cancers, detected in tumor cells and neighboring microvascular endothelium, but not in normal glandular tissues (at protein level). Expressed in dermal resting mast cells (at protein level) and pulmonary mast cells. Expressed in neuronal fibers (at protein level). Highly expressed in dorsal root ganglia neurons (at protein level). Expressed in Purkinje cells in cerebellum (at protein level). In stomach is preferentially expressed in neuronal fibers and in microvascular endothelium. Sparsely expressed in normal aorta (at protein level). Highly expressed in macrophages and smooth muscle cells in aorta with atheroma.

It is found in the secreted. The protein resides in the cell membrane. Its subcellular location is the cytoplasm. It localises to the cytoskeleton. The protein localises to the microtubule organizing center. It is found in the centrosome. The protein resides in the centriole. Its subcellular location is the recycling endosome. The catalysed reaction is a 1,2-diacyl-sn-glycero-3-phosphocholine + H2O = a 1-acyl-sn-glycero-3-phosphocholine + a fatty acid + H(+). It catalyses the reaction 1-hexadecanoyl-2-(9Z,12Z-octadecadienoyl)-sn-glycero-3-phosphocholine + H2O = (9Z,12Z)-octadecadienoate + 1-hexadecanoyl-sn-glycero-3-phosphocholine + H(+). The enzyme catalyses 1-hexadecanoyl-2-(5Z,8Z,11Z,14Z-eicosatetraenoyl)-sn-glycero-3-phosphocholine + H2O = 1-hexadecanoyl-sn-glycero-3-phosphocholine + (5Z,8Z,11Z,14Z)-eicosatetraenoate + H(+). It carries out the reaction 1-hexadecanoyl-2-(9Z,12Z-octadecadienoyl)-sn-glycero-3-phosphoethanolamine + H2O = 1-hexadecanoyl-sn-glycero-3-phosphoethanolamine + (9Z,12Z)-octadecadienoate + H(+). The catalysed reaction is 1-hexadecanoyl-2-(5Z,8Z,11Z,14Z-eicosatetraenoyl)-sn-glycero-3-phosphoethanolamine + H2O = 1-hexadecanoyl-sn-glycero-3-phosphoethanolamine + (5Z,8Z,11Z,14Z)-eicosatetraenoate + H(+). With respect to regulation, arachidonic acid release is markedly increased by glypican, a glycosylphosphatidylinositol-anchored heparan sulfate proteoglycan. In terms of biological role, secretory calcium-dependent phospholipase A2 that primarily targets extracellular phospholipids. Hydrolyzes the ester bond of the fatty acyl group attached at sn-2 position of phospholipids without apparent head group selectivity. Contributes to phospholipid remodeling of low-density lipoprotein (LDL) and high-density lipoprotein (HDL) particles. Hydrolyzes LDL phospholipids releasing unsaturated fatty acids that regulate macrophage differentiation toward foam cells. May act in an autocrine and paracrine manner. Secreted by immature mast cells, acts on nearby fibroblasts upstream to PTDGS to synthesize prostaglandin D2 (PGD2), which in turn promotes mast cell maturation and degranulation via PTGDR. Secreted by epididymal epithelium, acts on immature sperm cells within the duct, modulating the degree of unsaturation of the fatty acyl components of phosphatidylcholines required for acrosome assembly and sperm cell motility. Facilitates the replacement of fatty acyl chains in phosphatidylcholines in sperm membranes from omega-6 and omega-9 to omega-3 polyunsaturated fatty acids (PUFAs). Coupled to lipoxygenase pathway, may process omega-6 PUFAs to generate oxygenated lipid mediators in the male reproductive tract. At pericentrosomal preciliary compartment, negatively regulates ciliogenesis likely by regulating endocytotic recycling of ciliary membrane protein. Coupled to cyclooxygenase pathway provides arachidonate to generate prostaglandin E2 (PGE2), a potent immunomodulatory lipid in inflammation and tumorigenesis. At colonic epithelial barrier, preferentially hydrolyzes phospholipids having arachidonate and docosahexaenoate at sn-2 position, contributing to the generation of oxygenated metabolites involved in colonic stem cell homeostasis. Releases C16:0 and C18:0 lysophosphatidylcholine subclasses from neuron plasma membranes and promotes neurite outgrowth and neuron survival. This is Group 3 secretory phospholipase A2 from Homo sapiens (Human).